A 361-amino-acid polypeptide reads, in one-letter code: Cobalt-precorrin-5B C(1)-methyltransferase (361 aa).

Belongs to the CbiD family.

The enzyme catalyses Co-precorrin-5B + S-adenosyl-L-methionine = Co-precorrin-6A + S-adenosyl-L-homocysteine. It functions in the pathway cofactor biosynthesis; adenosylcobalamin biosynthesis; cob(II)yrinate a,c-diamide from sirohydrochlorin (anaerobic route): step 6/10. Functionally, catalyzes the methylation of C-1 in cobalt-precorrin-5B to form cobalt-precorrin-6A. In Methanobrevibacter smithii (strain ATCC 35061 / DSM 861 / OCM 144 / PS), this protein is Cobalt-precorrin-5B C(1)-methyltransferase.